The primary structure comprises 258 residues: uncharacterized protein (258 aa).

One can recognise an HTH deoR-type domain in the interval 3-58; it reads VAERQQKIVEIVNMRSSIRVSELSDIFSVTEETIRRDLEKLEKEHKLSRSHGGAVS. Positions 20-39 form a DNA-binding region, H-T-H motif; it reads IRVSELSDIFSVTEETIRRD.

This is an uncharacterized protein from Bacillus subtilis (strain 168).